Consider the following 368-residue polypeptide: Putative transport protein bbp_117 (368 aa).

Transmembrane regions (helical) follow at residues 13-35 (VIFSLVFIFIMIISSLWIMRPFF), 39-61 (AWASMVVVATWPIFLKLQILLWG), 68-90 (VMMTFSLLLVFIIPIVCLVNSLI), 159-181 (HFGRFILHLIFMLIFSALLYWNG), 216-238 (LGVVVTALVQGILSGIGLAISGI), 248-270 (IIIFCLVQLGPLPVLIPAIIWLY), 277-299 (WGTVLLIWSCVVCILDHILRPIL), and 314-336 (GVIGGLIAFGMIGLFIGPVVLII).

The protein belongs to the autoinducer-2 exporter (AI-2E) (TC 2.A.86) family.

The protein resides in the cell membrane. The polypeptide is Putative transport protein bbp_117 (Buchnera aphidicola subsp. Baizongia pistaciae (strain Bp)).